Here is a 205-residue protein sequence, read N- to C-terminus: Ribonuclease HII (205 aa).

Positions 15 to 205 constitute an RNase H type-2 domain; that stretch reads SQVCGIDEAG…SFKLRKLGEK (191 aa). 3 residues coordinate a divalent metal cation: D21, E22, and D117.

It belongs to the RNase HII family. Mn(2+) is required as a cofactor. The cofactor is Mg(2+).

It is found in the cytoplasm. It carries out the reaction Endonucleolytic cleavage to 5'-phosphomonoester.. Functionally, endonuclease that specifically degrades the RNA of RNA-DNA hybrids. This is Ribonuclease HII from Chlorobaculum tepidum (strain ATCC 49652 / DSM 12025 / NBRC 103806 / TLS) (Chlorobium tepidum).